A 1600-amino-acid chain; its full sequence is Eukaryotic translation initiation factor 4 gamma 1 (1600 aa).

Residues 1-88 (MNKAPQPTGP…ARPGPAPHVY (88 aa)) form a disordered region. A compositionally biased stretch (pro residues) spans 7–24 (PTGPPPARSPGLPQPAFP). S15 bears the Phosphoserine mark. Over residues 34-48 (STPQATQMNTPSQPR) the composition is skewed to polar residues. Over residues 60–79 (PSRAQPPSSAASRVQSAAPA) the composition is skewed to low complexity. R80 and R117 each carry omega-N-methylarginine. Disordered stretches follow at residues 173 to 230 (NQPP…NGES), 243 to 326 (SQGA…LSPE), 366 to 501 (ETHE…QLSQ), 507 to 526 (AATQVAVSVPKRRRKIKELN), and 541 to 606 (VDPA…DQWK). The tract at residues 179–207 (APKRERKTIRIRDPNQGGKDITEEIMSGA) is PABPC1-binding. A compositionally biased stretch (polar residues) spans 208 to 220 (RTASTPTPPQTGG). T214 is modified (phosphothreonine). Position 230 is a phosphoserine (S230). A compositionally biased stretch (pro residues) spans 269–280 (SPSPTPSPPPIL). The residue at position 324 (S324) is a Phosphoserine. Over residues 438 to 449 (KVSSAALASILS) the composition is skewed to low complexity. Positions 463–479 (QEEEMEEDDDDEEGGEA) are enriched in acidic residues. The segment covering 551 to 562 (QPPTGSNPSPES) has biased composition (polar residues). 2 stretches are compositionally biased toward basic and acidic residues: residues 578–587 (WDSKEDKIHN) and 596–606 (QKYEYKSDQWK). At K606 the chain carries N6-acetyllysine. Residues 611 to 622 (EEKKRYDREFLL) form an EIF4E-binding region. Phosphothreonine is present on T651. Disordered regions lie at residues 667–719 (GPDF…TRKI) and 734–760 (AEKAWKPSSKRTAADKDRGEEDADGSK). The segment at 686 to 1089 (GPPRGGPGGE…GSIDSNNQLF (404 aa)) is eIF3/EIF4A-binding. Omega-N-methylarginine occurs at positions 689 and 698. Positions 697 to 707 (PRGPAGLGPRR) are enriched in low complexity. Positions 745 to 760 (TAADKDRGEEDADGSK) are enriched in basic and acidic residues. Residues 765–993 (FRRVRSILNK…QDVLDLRQSN (229 aa)) form the MIF4G domain. Disordered regions lie at residues 1029 to 1117 (AKGS…SEAT) and 1129 to 1238 (QQTL…AALS). At S1032 the chain carries Phosphoserine. R1036 and R1046 each carry omega-N-methylarginine. S1081 and S1096 each carry phosphoserine. Residue K1099 is modified to N6-acetyllysine. Residues S1147 and S1149 each carry the phosphoserine modification. Basic and acidic residues predominate over residues 1148–1180 (LSRERGEKAGDRGDRLERSERGGDRGDRLDRAR). Phosphoserine; by PKC/PRKCA is present on S1187. Basic and acidic residues predominate over residues 1188-1225 (FSKEVEERSRERPSQPEGLRKAASLTEDRGRDPVKREA). Phosphoserine occurs at positions 1189, 1196, and 1211. The residue at position 1213 (T1213) is a Phosphothreonine. Phosphoserine occurs at positions 1231 and 1238. The MI domain maps to 1241 to 1363 (EVEKKSKAII…PMGELFREIT (123 aa)). The region spanning 1429–1599 (ESEAPGQRTL…REAEDEESDH (171 aa)) is the W2 domain. The EIF4A-binding stretch occupies residues 1450-1600 (LLKDGGSNQR…EAEDEESDHN (151 aa)). Positions 1585–1600 (FFNWLREAEDEESDHN) are necessary but not sufficient for MKNK1-binding. S1597 is modified (phosphoserine).

It belongs to the eukaryotic initiation factor 4G family. In terms of assembly, eIF4F is a multi-subunit complex, the composition of which varies with external and internal environmental conditions. It is composed of at least EIF4A, EIF4E (cap-binding) and EIF4G1/EIF4G3. Interacts with eIF3 complex, mutually exclusive with EIF4A1 or EIF4A2, EIF4E and through its N-terminus with PABPC1. Interacts with EIF4E or with EIF1 (mutually exclusive) through a common binding site. Interacts through its C-terminus with the serine/threonine kinases MKNK1, and with MKNK2. Appears to act as a scaffold protein, holding these enzymes in place to phosphorylate EIF4E. Non-phosphorylated EIF4EBP1 competes with EIF4G1/EIF4G3 to interact with EIF4E; insulin stimulated MAP-kinase (MAPK1 and MAPK3) phosphorylation of EIF4EBP1 causes dissociation of the complex allowing EIF4G1/EIF4G3 to bind and consequent initiation of translation. EIF4G1/EIF4G3 interacts with PABPC1 to bring about circularization of the mRNA. Interacts with EIF4E3. Interacts with CIRBP and MIF4GD. Interacts with RBM4. Interacts with HNRNPD/AUF1; the interaction requires RNA. Interacts with DDX3X; the interaction requires RNA. Interacts with DAZAP2. (Microbial infection) Interacts with murine norovirus viral genome-linked protein (via C-terminus); this interaction plays a role in translation of viral proteins. In terms of processing, phosphorylated at multiple sites in vivo. Phosphorylation at Ser-1187 by PRKCA induces binding to MKNK1.

Its subcellular location is the cytoplasm. It is found in the nucleus. The protein localises to the stress granule. Its function is as follows. Component of the protein complex eIF4F, which is involved in the recognition of the mRNA cap, ATP-dependent unwinding of 5'-terminal secondary structure and recruitment of mRNA to the ribosome. Exists in two complexes, either with EIF1 or with EIF4E (mutually exclusive). Together with EIF1, is required for leaky scanning, in particular for avoiding cap-proximal start codon. Together with EIF4E, antagonizes the scanning promoted by EIF1-EIF4G1 and locates the start codon (through a TISU element) without scanning. As a member of the eIF4F complex, required for endoplasmic reticulum stress-induced ATF4 mRNA translation. This is Eukaryotic translation initiation factor 4 gamma 1 (Eif4g1) from Mus musculus (Mouse).